Consider the following 570-residue polypeptide: La-related protein 7 (570 aa).

At Met-1 the chain carries N-acetylmethionine. Positions 1-16 (METENQKTMEESTKRK) are enriched in basic and acidic residues. 2 disordered regions span residues 1-24 (METENQKTMEESTKRKEEKKKRSR) and 180-364 (LNNP…ERHK). An HTH La-type RNA-binding domain is found at 22–116 (RSRVKQVLAD…KPLGERPKDE (95 aa)). The 79-residue stretch at 119–197 (RTVYVELLPK…PRKPGIFPKT (79 aa)) folds into the RRM domain. A compositionally biased stretch (basic residues) spans 213–222 (KKKKKKKGRI). Lys-231 is covalently cross-linked (Glycyl lysine isopeptide (Lys-Gly) (interchain with G-Cter in SUMO2)). A Phosphothreonine modification is found at Thr-251. Phosphoserine is present on residues Ser-253 and Ser-256. Residue Thr-260 is modified to Phosphothreonine. Residues 286–295 (RAGKRERCSA) are compositionally biased toward basic and acidic residues. Ser-294 and Ser-334 each carry phosphoserine. Thr-335 is subject to Phosphothreonine. Basic and acidic residues predominate over residues 340–349 (ETDRKGDSLS). Phosphoserine is present on Ser-347. Basic residues predominate over residues 350 to 363 (KVKRKHKKKHKERH). A Glycyl lysine isopeptide (Lys-Gly) (interchain with G-Cter in SUMO2) cross-link involves residue Lys-406. The xRRM domain maps to 438–551 (QFVTGVIVKI…TEKLITKAEK (114 aa)).

It belongs to the LARP7 family. As to quaternary structure, core component of the 7SK RNP complex, at least composed of 7SK RNA, LARP7, MEPCE, HEXIM1 (or HEXIM2) and P-TEFb (composed of CDK9 and CCNT1/cyclin-T1). Interacts with METTL16. Interacts with RBM7; upon genotoxic stress this interaction is enhanced, triggering the release of inactive P-TEFb complex from the core, yielding to P-TEFb complex activation. Associates with box C/D small nucleolar ribonucleoprotein (snoRNP) complexes.

It localises to the nucleus. The protein localises to the nucleoplasm. Functionally, RNA-binding protein that specifically binds distinct small nuclear RNA (snRNAs) and regulates their processing and function. Specifically binds the 7SK snRNA (7SK RNA) and acts as a core component of the 7SK ribonucleoprotein (RNP) complex, thereby acting as a negative regulator of transcription elongation by RNA polymerase II. The 7SK RNP complex sequesters the positive transcription elongation factor b (P-TEFb) in a large inactive 7SK RNP complex preventing RNA polymerase II phosphorylation and subsequent transcriptional elongation. The 7SK RNP complex also promotes snRNA gene transcription by RNA polymerase II via interaction with the little elongation complex (LEC). LARP7 specifically binds to the highly conserved 3'-terminal U-rich stretch of 7SK RNA; on stimulation, remains associated with 7SK RNA, whereas P-TEFb is released from the complex. LARP7 also acts as a regulator of mRNA splicing fidelity by promoting U6 snRNA processing. Specifically binds U6 snRNAs and associates with a subset of box C/D RNP complexes: promotes U6 snRNA 2'-O-methylation by facilitating U6 snRNA loading into box C/D RNP complexes. U6 snRNA 2'-O-methylation is required for mRNA splicing fidelity. Binds U6 snRNAs with a 5'-CAGGG-3' sequence motif. U6 snRNA processing is required for spermatogenesis. The protein is La-related protein 7 of Mus musculus (Mouse).